A 631-amino-acid polypeptide reads, in one-letter code: Beta-galactosidase-1-like protein 3 (631 aa).

Glu203 (proton donor) is an active-site residue. Glu277 acts as the Nucleophile in catalysis.

The protein belongs to the glycosyl hydrolase 35 family.

This chain is Beta-galactosidase-1-like protein 3 (Glb1l3), found in Rattus norvegicus (Rat).